The primary structure comprises 187 residues: Putative manganese efflux pump MntP (187 aa).

Helical transmembrane passes span Tyr-3–Gly-23, Ile-39–Ser-59, Ile-65–Ile-85, Leu-106–Phe-126, Val-129–Gly-149, and Leu-166–Phe-186.

Belongs to the MntP (TC 9.B.29) family.

The protein localises to the cell inner membrane. Probably functions as a manganese efflux pump. The polypeptide is Putative manganese efflux pump MntP (Actinobacillus succinogenes (strain ATCC 55618 / DSM 22257 / CCUG 43843 / 130Z)).